Here is a 258-residue protein sequence, read N- to C-terminus: tRNA pseudouridine synthase A (258 aa).

The Nucleophile role is filled by Asp52. Tyr110 serves as a coordination point for substrate.

It belongs to the tRNA pseudouridine synthase TruA family. Homodimer.

It carries out the reaction uridine(38/39/40) in tRNA = pseudouridine(38/39/40) in tRNA. Its function is as follows. Formation of pseudouridine at positions 38, 39 and 40 in the anticodon stem and loop of transfer RNAs. The protein is tRNA pseudouridine synthase A of Francisella tularensis subsp. holarctica (strain LVS).